Consider the following 152-residue polypeptide: 17.1 kDa class II heat shock protein (152 aa).

The sHSP domain occupies 36-152; it reads DAKAMAATPA…KPKTIQVKVA (117 aa).

Belongs to the small heat shock protein (HSP20) family.

The protein localises to the cytoplasm. The chain is 17.1 kDa class II heat shock protein (HSP17.7) from Pisum sativum (Garden pea).